Here is a 185-residue protein sequence, read N- to C-terminus: uncharacterized protein (185 aa).

Met1 is modified (N-acetylmethionine). Composition is skewed to basic and acidic residues over residues 1–18 (MDAF…QDKQ), 26–47 (TPSD…TTEE), and 59–71 (SNED…PVLE). Disordered regions lie at residues 1-71 (MDAF…PVLE) and 155-185 (DHDR…DGLL). A compositionally biased stretch (acidic residues) spans 170-185 (LPEELETDQDFLDGLL).

This is an uncharacterized protein from Saccharomyces cerevisiae (strain ATCC 204508 / S288c) (Baker's yeast).